The following is a 389-amino-acid chain: S-adenosylmethionine synthase (389 aa).

H16 lines the ATP pocket. D18 is a Mg(2+) binding site. Position 44 (E44) interacts with K(+). L-methionine contacts are provided by E57 and Q100. The tract at residues 100–110 is flexible loop; that stretch reads QSPDIAQGVDE. Residues 167 to 169, 233 to 234, D242, 248 to 249, A265, and K269 each bind ATP; these read DAK, RF, and RK. Residue D242 coordinates L-methionine. K273 contacts L-methionine.

It belongs to the AdoMet synthase family. Homotetramer; dimer of dimers. Mg(2+) is required as a cofactor. The cofactor is K(+).

It is found in the cytoplasm. It carries out the reaction L-methionine + ATP + H2O = S-adenosyl-L-methionine + phosphate + diphosphate. The protein operates within amino-acid biosynthesis; S-adenosyl-L-methionine biosynthesis; S-adenosyl-L-methionine from L-methionine: step 1/1. Catalyzes the formation of S-adenosylmethionine (AdoMet) from methionine and ATP. The overall synthetic reaction is composed of two sequential steps, AdoMet formation and the subsequent tripolyphosphate hydrolysis which occurs prior to release of AdoMet from the enzyme. This is S-adenosylmethionine synthase from Acidithiobacillus ferrooxidans (strain ATCC 23270 / DSM 14882 / CIP 104768 / NCIMB 8455) (Ferrobacillus ferrooxidans (strain ATCC 23270)).